The primary structure comprises 177 residues: Large ribosomal subunit protein uL6 (177 aa).

This sequence belongs to the universal ribosomal protein uL6 family. Part of the 50S ribosomal subunit.

Functionally, this protein binds to the 23S rRNA, and is important in its secondary structure. It is located near the subunit interface in the base of the L7/L12 stalk, and near the tRNA binding site of the peptidyltransferase center. This is Large ribosomal subunit protein uL6 from Methanothermobacter thermautotrophicus (strain ATCC 29096 / DSM 1053 / JCM 10044 / NBRC 100330 / Delta H) (Methanobacterium thermoautotrophicum).